The following is a 225-amino-acid chain: MITAITRTALPRATLRTSLATMSTIRAKHTLPPLPYAYDALEPSISAEIMNLHHTKHHQTYVNGLNAAEESLQKASADGDFKTAISLQPALKFNGGGHINHSLFWKNLAPTGSAQVKVPTSGVFYDQVQADFGGFENLKKEMNAKTAAIQGSGWGWLGYNKATKKLEIVTTPNQDPLLSHVPIIGIDIWEHAFYLQYKNVKPDYLNAIWNVINYEEAESRLKAAQ.

The N-terminal 27 residues, 1 to 27 (MITAITRTALPRATLRTSLATMSTIRA), are a transit peptide targeting the mitochondrion. Positions 53, 101, 187, and 191 each coordinate Mn(2+).

The protein belongs to the iron/manganese superoxide dismutase family. The cofactor is Mn(2+).

The protein localises to the mitochondrion. It is found in the cytoplasm. The enzyme catalyses 2 superoxide + 2 H(+) = H2O2 + O2. Destroys radicals which are normally produced within the cells and which are toxic to biological systems. Functionally, destroys mitochondrial radicals produced by oxidative stress. Its function is as follows. Destroys cytoplasmic radicals produced in low copper environments; a condition which inactivates the cytoplasmic copper-dependent superoxide dismutase SOD1. The protein is Superoxide dismutase [Mn], mitochondrial of Cryptococcus neoformans var. grubii serotype A (strain H99 / ATCC 208821 / CBS 10515 / FGSC 9487) (Filobasidiella neoformans var. grubii).